Reading from the N-terminus, the 1441-residue chain is Tripeptidyl-peptidase 2 (1441 aa).

The segment at 62–89 (AESSERSNSSKKTTNKEQSDKSAESRMA) is disordered. Residues 75 to 85 (TNKEQSDKSAE) show a composition bias toward basic and acidic residues. Positions 107-608 (ETGVLNFLQK…HGLLNVEKAF (502 aa)) constitute a Peptidase S8 domain. Catalysis depends on charge relay system residues Asp-131, His-359, and Ser-549. The span at 1139–1155 (TANGAKPKAPATPQAAT) shows a compositional bias: low complexity. 2 disordered regions span residues 1139 to 1190 (TANG…KANA) and 1255 to 1274 (QKTS…EDQK). Ser-1182 carries the phosphoserine modification. Residues 1265-1274 (SADKQKEDQK) are compositionally biased toward basic and acidic residues.

Belongs to the peptidase S8 family. Homooligomer; forms a complex of 6 MDa probably composed of 40 subunits. Forms a structure consisting of 2 segmented and twisted strands that form a spindle-shaped structure. Each strand is composed of 10 segments (a segment being a homodimer oriented head to head), stacking of these segments leads to the formation of a twisted single strand. 2 strands compose the fully assembled spindle.

Its subcellular location is the cytoplasm. It carries out the reaction Release of an N-terminal tripeptide from a polypeptide.. With respect to regulation, inhibited by phenylmethanesulfonyl fluoride (PMSF) and butabindide, but not by peptidase inhibitor pepstatin, EDTA, nor bestatin. Component of the proteolytic cascade acting downstream of the 26S proteasome in the ubiquitin-proteasome pathway. Efficiently cleaves Ala-Ala-Ala-polypeptide and Pro-Pro-Ala-polypeptide, Val-Leu-Lys-polypeptide only at high concentration. Does not cleave Ala-Phe-Pro-polypeptide nor Pro-Leu-Gly-polypeptide. This is Tripeptidyl-peptidase 2 (TppII) from Drosophila melanogaster (Fruit fly).